The following is a 471-amino-acid chain: Coagulation factor IX (471 aa).

The signal sequence occupies residues 1 to 28 (MKHLNTVMAESPALITIFLLGYLLSTEC). Positions 29–46 (AVFLDRENATKILTRPKR) are excised as a propeptide. Ca(2+) contacts are provided by Y47, N48, E53, E54, E61, E63, E66, E67, E72, E73, and E76. A Gla domain is found at 47–92 (YNSGKLEEFVRGNLERECIEERCSFEEAREVFENTEKTTEFWKQYV). Residues E53, E54, E61, E63, E66, E67, E72, E73, E76, E79, and E82 each carry the 4-carboxyglutamate modification. A Mg(2+)-binding site is contributed by E61. C64 and C69 are oxidised to a cystine. E66 is a binding site for Mg(2+). E72 is a Mg(2+) binding site. E76 is a Mg(2+) binding site. E82 serves as a coordination point for Ca(2+). Mg(2+) is bound at residue E82. A glycan (O-linked (GalNAc...) threonine) is linked at T85. Positions 86, 93, 94, and 96 each coordinate Ca(2+). At E86 the chain carries 4-carboxyglutamate. E86 contributes to the Mg(2+) binding site. An EGF-like 1; calcium-binding domain is found at 93 to 129 (DGDQCESNPCLNGGICKDDISSYECWCQVGFEGRNCE). 10 cysteine pairs are disulfide-bonded: C97–C108, C102–C117, C119–C128, C134–C145, C141–C155, C157–C170, C178–C345, C262–C278, C392–C406, and C417–C445. A glycan (O-linked (Glc...) serine) is linked at S99. 2 residues coordinate Ca(2+): D110 and D111. D110 is subject to (3R)-3-hydroxyaspartate. S114 is subject to Phosphoserine. Positions 130-171 (LDATCNIKNGRCKQFCKNSPDNKVICSCTEGYQLAEDQKSCE) constitute an EGF-like 2 domain. Residues 193-236 (AETVFSNMDYENSTEAVFIQDDITDGAILNNVTESSESLNDFTR) constitute a propeptide, activation peptide. At Y202 the chain carries Sulfotyrosine. A glycan (N-linked (GlcNAc...) asparagine) is linked at N204. S205 is modified (phosphoserine). A Phosphothreonine; alternate modification is found at T206. A glycan (O-linked (GalNAc...) threonine; alternate) is linked at T206. An N-linked (GlcNAc...) asparagine glycan is attached at N223. 2 O-linked (GalNAc...) threonine glycosylation sites follow: T225 and T235. Residues 237 to 469 (VVGGENAKPG…YVNWIKEKTK (233 aa)) form the Peptidase S1 domain. H277 (charge relay system) is an active-site residue. Ca(2+) is bound by residues E291, N293, E298, and E301. D325 acts as the Charge relay system in catalysis. Catalysis depends on S421, which acts as the Charge relay system.

It belongs to the peptidase S1 family. As to quaternary structure, heterodimer of a light chain and a heavy chain; disulfide-linked. Interacts (inactive and activated) with F11 (activated) in calcium-dependent manner. Interacts with SERPINC1. Activated by factor XIa, which excises the activation peptide. The propeptide can also be removed by snake venom protease. Activated by coagulation factor VIIa-tissue factor (F7-F3) complex in calcium-dependent manner. In terms of processing, the iron and 2-oxoglutarate dependent 3-hydroxylation of aspartate and asparagine is (R) stereospecific within EGF domains. Post-translationally, predominantly O-glucosylated at Ser-99 by POGLUT1 in vitro. As to expression, detected in liver.

Its subcellular location is the secreted. It catalyses the reaction Selective cleavage of Arg-|-Ile bond in factor X to form factor Xa.. In terms of biological role, factor IX is a vitamin K-dependent plasma protein that participates in the intrinsic pathway of blood coagulation by converting factor X to its active form in the presence of Ca(2+) ions, phospholipids, and factor VIIIa. This chain is Coagulation factor IX (F9), found in Mus musculus (Mouse).